A 604-amino-acid chain; its full sequence is uncharacterized protein (604 aa).

Residues 45-329 (LPLSFLTVLI…LGQVYNQLLM (285 aa)) form the ABC transmembrane type-1 domain. 6 helical membrane-spanning segments follow: residues 49–69 (FLTVLIGTAVKLVIPILIGVY), 82–102 (LLIQLIFIISGLYVLNYAANV), 162–182 (VINLLTDLLLLAGVIIILFTL), 184–204 (PELTIAIMVTLPIMFFISTSL), 273–293 (LVEMTNAIGTAVLIWYGATLI), and 297–317 (TITIGVFVSFAFYLGMFWEPI). One can recognise an ABC transporter domain in the interval 363-597 (ISFEEVEFSY…GGIYAGLVKA (235 aa)). 396-403 (GHTGSGKT) provides a ligand contact to ATP.

This sequence belongs to the ABC transporter superfamily.

The protein localises to the cell membrane. This is an uncharacterized protein from Bacillus subtilis (strain 168).